A 370-amino-acid chain; its full sequence is MKKRIALLPGDGIGPEVLDAAVDVLKSVAEHYQHEFEFEYGLIGGAAIDEAGAPLPEETVAACKAADAILLGAVGGPKWDQNPSELRPEKGLLAIRKQLDLFANLRPVKVFESLAGASPLKTEYIEGVDFVIVRELTGGLYFGKPSEQYVNQNGEEEAVDTLFYKKSEMERVIREAFQMAQSRKGKVTSVDKANVLESSKLWRKTAEEVAKEFPDVKLEHMLVDNAAMQLIYAPGQFDIIVTENMFGDILSDEASMLTGSLGMLPSASLSSSGLHLYEPVHGSAPDIAGQNIANPLAAILSAAMMLRTSFGLEAEAQAVEHAVDQVLRAGKRTKDLAKGSEHCTTQSITGEVKAALADDNAISNIMTAYV.

Glycine 76–glutamate 89 is a binding site for NAD(+). Residues arginine 96, arginine 106, arginine 134, and aspartate 224 each contribute to the substrate site. Residues aspartate 224, aspartate 248, and aspartate 252 each coordinate Mg(2+). Glycine 282–asparagine 294 provides a ligand contact to NAD(+).

This sequence belongs to the isocitrate and isopropylmalate dehydrogenases family. LeuB type 1 subfamily. Homodimer. It depends on Mg(2+) as a cofactor. Requires Mn(2+) as cofactor.

It localises to the cytoplasm. It carries out the reaction (2R,3S)-3-isopropylmalate + NAD(+) = 4-methyl-2-oxopentanoate + CO2 + NADH. It functions in the pathway amino-acid biosynthesis; L-leucine biosynthesis; L-leucine from 3-methyl-2-oxobutanoate: step 3/4. Its function is as follows. Catalyzes the oxidation of 3-carboxy-2-hydroxy-4-methylpentanoate (3-isopropylmalate) to 3-carboxy-4-methyl-2-oxopentanoate. The product decarboxylates to 4-methyl-2 oxopentanoate. The chain is 3-isopropylmalate dehydrogenase from Bacillus licheniformis (strain ATCC 14580 / DSM 13 / JCM 2505 / CCUG 7422 / NBRC 12200 / NCIMB 9375 / NCTC 10341 / NRRL NRS-1264 / Gibson 46).